The chain runs to 425 residues: 2,3-diketo-L-gulonate TRAP transporter large permease protein YiaN (425 aa).

The next 11 membrane-spanning stretches (helical) occupy residues 3-23 (VLIF…IAWA), 54-74 (FSLL…AGGL), 93-113 (LGYV…SAVA), 139-159 (LIAS…FIIF), 170-190 (LFMA…LTWW), 209-229 (IWHS…IIGG), 235-255 (FTPT…ATVI), 277-297 (VVMF…IAEL), 314-334 (LLFI…DLTP), 355-375 (IYFG…PPIG), and 399-419 (YVLV…LIIL).

It belongs to the TRAP transporter large permease family. In terms of assembly, the complex comprises the extracytoplasmic solute receptor protein YiaO, and the two transmembrane proteins YiaM and YiaN.

The protein resides in the cell inner membrane. In terms of biological role, part of the tripartite ATP-independent periplasmic (TRAP) transport system YiaMNO involved in the uptake of 2,3-diketo-L-gulonate. This Escherichia coli (strain K12) protein is 2,3-diketo-L-gulonate TRAP transporter large permease protein YiaN (yiaN).